The following is a 146-amino-acid chain: Protein SprT-like (146 aa).

In terms of domain architecture, SprT-like spans 4-142; that stretch reads NEYVKQVSLE…GRCKGKLRLL (139 aa). His-64 is a Zn(2+) binding site. Residue Glu-65 is part of the active site. His-68 is a binding site for Zn(2+).

It belongs to the SprT family. Zn(2+) serves as cofactor.

It is found in the cytoplasm. This chain is Protein SprT-like, found in Streptococcus gordonii (strain Challis / ATCC 35105 / BCRC 15272 / CH1 / DL1 / V288).